The following is a 914-amino-acid chain: Caprin-2 (914 aa).

7 disordered regions span residues 259–283 (PLPK…PSGL), 298–326 (EFLN…KEDF), 367–411 (KTVD…LPKD), 439–480 (DGES…SSQR), 495–529 (CLSN…PPLY), 608–631 (HRSF…PELN), and 718–747 (GAGT…AYPL). A compositionally biased stretch (basic and acidic residues) spans 264-273 (DSQEKTETIK). Over residues 274–283 (PDSQSRPSGL) the composition is skewed to polar residues. Residues 370 to 392 (DIVKRSTTDPKEKRQRKKAEQDS) show a composition bias toward basic and acidic residues. Residues 469-480 (KSPSDILPSSQR) show a composition bias toward polar residues. The span at 508–520 (LELHSEDKPRKQA) shows a compositional bias: basic and acidic residues. A compositionally biased stretch (low complexity) spans 610 to 626 (SFTSAKTSSVTTASTQT). Residues 718-738 (GAGTATQRSSAGWSDSSQVSS) show a composition bias toward polar residues. In terms of domain architecture, C1q spans 780–914 (LTQLRVAFSA…TFSGFLLYQD (135 aa)). Residues aspartate 865 and glutamate 871 each contribute to the Ca(2+) site.

This sequence belongs to the caprin family. As to quaternary structure, homotrimer; via C1q domain.

Its subcellular location is the cytoplasm. It localises to the cell membrane. Functionally, promotes phosphorylation of the Wnt coreceptor LRP6, leading to increased activity of the canonical Wnt signaling pathway. Facilitates constitutive LRP6 phosphorylation by CDK14/CCNY during G2/M stage of the cell cycle, which may potentiate cells for Wnt signaling. May regulate the transport and translation of mRNAs, modulating for instance the expression of proteins involved in synaptic plasticity in neurons. Involved in regulation of growth as erythroblasts shift from a highly proliferative state towards their terminal phase of differentiation. May be involved in apoptosis. This chain is Caprin-2, found in Danio rerio (Zebrafish).